Reading from the N-terminus, the 280-residue chain is Large ribosomal subunit protein uL2 (280 aa).

2 disordered regions span residues 33–55 and 199–266; these read LTEG…RRRG and DNSN…KASQ. A compositionally biased stretch (basic residues) spans 209–219; that stretch reads GRMRHKGKRPS.

This sequence belongs to the universal ribosomal protein uL2 family. Part of the 50S ribosomal subunit. Forms a bridge to the 30S subunit in the 70S ribosome.

Functionally, one of the primary rRNA binding proteins. Required for association of the 30S and 50S subunits to form the 70S ribosome, for tRNA binding and peptide bond formation. It has been suggested to have peptidyltransferase activity; this is somewhat controversial. Makes several contacts with the 16S rRNA in the 70S ribosome. This is Large ribosomal subunit protein uL2 from Ruegeria sp. (strain TM1040) (Silicibacter sp.).